We begin with the raw amino-acid sequence, 437 residues long: MLREALRIGNRRWYSYKSVRRPNLGATGTPKMEPPKEQPEASSKAESGHGSLAKQLRAKILSTGPIPVAEYMREVLTNPQAGYYMNRDVFGREGDFITSPEISQIFGELVGIWLVSEWRKMGSPSPFQLVELGPGRGTLARDVLKVLTKFKQDAEFSMHMVEVSPFLSKAQAQRFCYSHQTLPEDAQLPHYQEGTTASGTKAFWHRRLEDVPQGFSLVLAHEFFDALPVHKLQLVDGKWQEVLIDVASSDGAQEASFRYVLSRSQTPVSSLYRPLPGETRSCLEHSLETERQVGLLAERIERDGGIALIMDYGHFGEKTDTFRAFKQHKLHDPLVEPGSADLTADVDFKLVRHIAETRGNVHCCGPVEQGLFLQRMQGEARLEQLLAHALPENQEIIRSGYEMLTDPAQMGTRFKFLAMFPGVLAAHLDKYPVVGFS.

Residues 21 to 49 (RPNLGATGTPKMEPPKEQPEASSKAESGH) form a disordered region.

Belongs to the NDUFAF7 family.

The protein localises to the mitochondrion. The catalysed reaction is L-arginyl-[protein] + 2 S-adenosyl-L-methionine = N(omega),N(omega)'-dimethyl-L-arginyl-[protein] + 2 S-adenosyl-L-homocysteine + 2 H(+). In terms of biological role, arginine methyltransferase involved in the assembly or stability of mitochondrial NADH:ubiquinone oxidoreductase complex (complex I). This Drosophila melanogaster (Fruit fly) protein is Protein arginine methyltransferase NDUFAF7 homolog, mitochondrial.